The following is a 238-amino-acid chain: Ribonuclease PH (238 aa).

Phosphate-binding positions include R86 and 124–126 (GTR).

This sequence belongs to the RNase PH family. In terms of assembly, homohexameric ring arranged as a trimer of dimers.

The enzyme catalyses tRNA(n+1) + phosphate = tRNA(n) + a ribonucleoside 5'-diphosphate. Its function is as follows. Phosphorolytic 3'-5' exoribonuclease that plays an important role in tRNA 3'-end maturation. Removes nucleotide residues following the 3'-CCA terminus of tRNAs; can also add nucleotides to the ends of RNA molecules by using nucleoside diphosphates as substrates, but this may not be physiologically important. Probably plays a role in initiation of 16S rRNA degradation (leading to ribosome degradation) during starvation. This chain is Ribonuclease PH, found in Chelativorans sp. (strain BNC1).